Here is a 316-residue protein sequence, read N- to C-terminus: Vacuolar morphogenesis protein 7 (316 aa).

The 124-residue stretch at 1 to 124 folds into the PX domain; it reads MAANSVGKMS…QDFLQLSKPN (124 aa). Positions 168–186 form a coiled coil; sequence RARTKLHKLRERLEQDVQK. The t-SNARE coiled-coil homology domain occupies 250-312; sequence MQMVRDQEQE…QIANKKARHF (63 aa).

In terms of assembly, possibly multimeric. Associates with VAM3.

It is found in the vacuole. Essential for proper morphogenesis of the vacuole. May exist as structural reinforcement on the surface of the vacuolar membrane and be required for maintenance against rupture by osmotic pressure. The polypeptide is Vacuolar morphogenesis protein 7 (VAM7) (Saccharomyces cerevisiae (strain ATCC 204508 / S288c) (Baker's yeast)).